A 219-amino-acid polypeptide reads, in one-letter code: Octanoyltransferase (219 aa).

In terms of domain architecture, BPL/LPL catalytic spans 32-207 (ENSQDEIWIV…TLSQELGLDK (176 aa)). Residues 71-78 (RGGQVTYH), 138-140 (SLG), and 151-153 (GLA) contribute to the substrate site. Cys169 functions as the Acyl-thioester intermediate in the catalytic mechanism.

Belongs to the LipB family.

The protein localises to the cytoplasm. It catalyses the reaction octanoyl-[ACP] + L-lysyl-[protein] = N(6)-octanoyl-L-lysyl-[protein] + holo-[ACP] + H(+). Its pathway is protein modification; protein lipoylation via endogenous pathway; protein N(6)-(lipoyl)lysine from octanoyl-[acyl-carrier-protein]: step 1/2. Its function is as follows. Catalyzes the transfer of endogenously produced octanoic acid from octanoyl-acyl-carrier-protein onto the lipoyl domains of lipoate-dependent enzymes. Lipoyl-ACP can also act as a substrate although octanoyl-ACP is likely to be the physiological substrate. The polypeptide is Octanoyltransferase (Shewanella halifaxensis (strain HAW-EB4)).